We begin with the raw amino-acid sequence, 1193 residues long: K(+) efflux antiporter 1, chloroplastic (1193 aa).

A chloroplast-targeting transit peptide spans 1-49 (MEYASTFQRPILFHGGDGASYCFPNRLISPKGISITSGDSKVHSCFRLR). Residues 50–585 (RNVAQSGTLN…MIPHQEVNEE (536 aa)) lie on the Stromal side of the membrane. Residues 103–135 (SLGNADSNDHRIGESSESSDETEATDLKDARVE) are disordered. Residues 131–355 (DARVENDTDS…RAEKSLSISQ (225 aa)) adopt a coiled-coil conformation. At Lys-168 the chain carries N6-acetyllysine; by NSI. A compositionally biased stretch (polar residues) spans 351–364 (LSISQTPEETQGQL). Disordered stretches follow at residues 351-372 (LSIS…TSQE) and 421-474 (QPYE…NSPK). Basic and acidic residues predominate over residues 439–465 (KVVEADSEKPKINVQTKKQETQKDLPK). Residues 586–606 (EASLFDFLWLLLASVIFVPLF) form a helical membrane-spanning segment. Over 607–612 (QKIPGG) the chain is Chloroplast intermembrane. Residues 613-633 (SPVLGYLAAGILIGPYGLSII) traverse the membrane as a helical segment. Over 634-640 (RNVHGTR) the chain is Stromal. Residues 641–661 (AIAEFGVVFLLFNIGLELSVE) form a helical membrane-spanning segment. At 662–668 (RLSSMKK) the chain is on the chloroplast intermembrane side. The helical transmembrane segment at 669 to 689 (YVFGLGSAQVLVTAAVVGLLA) threads the bilayer. Residues 690–698 (HYVAGQAGP) are Stromal-facing. A helical membrane pass occupies residues 699–719 (AAIVIGNGLALSSTAVVLQVL). The Chloroplast intermembrane segment spans residues 720 to 733 (QERGESTSRHGRAS). Residues 734–754 (FSVLLFQDLAVVVLLILIPLI) form a helical membrane-spanning segment. At 755–766 (SPNSSKGGIGFQ) the chain is on the stromal side. A helical membrane pass occupies residues 767 to 787 (AIAEALGLAAVKAAVAITAII). Residues 788–827 (AGGRLLLRPIYKQIAENRNAEIFSANTLLVILGTSLLTAR) lie on the Chloroplast intermembrane side of the membrane. Residues 828–848 (AGLSMALGAFLAGLLLAETEF) form a helical membrane-spanning segment. Residues 849-860 (SLQVESDIAPYR) lie on the Stromal side of the membrane. A helical membrane pass occupies residues 861 to 881 (GLLLGLFFMTVGMSIDPKLLL). Topologically, residues 882–883 (SN) are chloroplast intermembrane. The chain crosses the membrane as a helical span at residues 884 to 904 (FPVIVGTLGLLIVGKTMLVVI). Residues 905–912 (MGKLFGIS) are Stromal-facing. The chain crosses the membrane as a helical span at residues 913-933 (IISAIRVGLLLAPGGEFAFVA). The Chloroplast intermembrane segment spans residues 934–948 (FGEAVNQGIMSPQLS). Residues 949–969 (SLLFLVVGISMAITPWLAAGG) traverse the membrane as a helical segment. At 970 to 1193 (QLIASRFELH…QIIEGGTVVI (224 aa)) the chain is on the stromal side. Residues 995–1112 (QGHIIICGFG…EKAGATAVVP (118 aa)) enclose the RCK N-terminal domain. Positions 1165–1184 (GYSRTSKPKPQPSDASGDNQ) are disordered.

This sequence belongs to the monovalent cation:proton antiporter 2 (CPA2) transporter (TC 2.A.37) family. KEA (TC 2.A.37.1) subfamily. Post-translationally, acetylated at Lys-168 by the stromal acetyltransferase enzyme NSI. As to expression, expressed in shoots and roots. Mainly localized to leaf veins, hypocotyls, mesophylls and guard cells. Accumulates at high levels in small and dividing plastids (at protein level).

Its subcellular location is the plastid. The protein resides in the chloroplast inner membrane. It carries out the reaction K(+)(in) + H(+)(out) = K(+)(out) + H(+)(in). With respect to regulation, repressed by sodium ions Na(+). Functionally, electroneutral K(+)/H(+) efflux antiporter involved in chloroplastic K(+) homeostasis and osmotic adjustment, especially during plastid division and thylakoid membrane formation. Collaboratively with KEA2, adjusts alkaline stromal pH upon light to dark transitions in plastids. Together with KEA2, critical for chloroplast development, including chloroplast RNA-metabolism (e.g. rRNA maturation, polysome loading and RNA-protein interactions) and plastid gene expression (PGE), ion homeostasis, and photosynthesis. Contributes, during early seedling development, to the regulation of photosynthesis and abscisic acid- (ABA-) mediated primary root growth in a sucrose-dependent manner. Involved in the regulation of reactive oxygen and nitrogen species (ROS and RNS) metabolism. Required in roots for rapid hyperosmotic-induced Ca(2+) responses and for osmo-sensory potentiation in hyperosmotic conditions. May counteract resilience to drought and salt stress, involving photorespiratory pathway and stomata closure. This is K(+) efflux antiporter 1, chloroplastic from Arabidopsis thaliana (Mouse-ear cress).